We begin with the raw amino-acid sequence, 670 residues long: tRNA 5-methylaminomethyl-2-thiouridine biosynthesis bifunctional protein MnmC (670 aa).

Residues 1-245 (MKPIAIQPAS…KREMLTGALS (245 aa)) form a tRNA (mnm(5)s(2)U34)-methyltransferase region. The interval 271–670 (VGGGIASALL…RKLLKGRAAS (400 aa)) is FAD-dependent cmnm(5)s(2)U34 oxidoreductase.

This sequence in the N-terminal section; belongs to the methyltransferase superfamily. tRNA (mnm(5)s(2)U34)-methyltransferase family. The protein in the C-terminal section; belongs to the DAO family. FAD serves as cofactor.

The protein resides in the cytoplasm. The catalysed reaction is 5-aminomethyl-2-thiouridine(34) in tRNA + S-adenosyl-L-methionine = 5-methylaminomethyl-2-thiouridine(34) in tRNA + S-adenosyl-L-homocysteine + H(+). Functionally, catalyzes the last two steps in the biosynthesis of 5-methylaminomethyl-2-thiouridine (mnm(5)s(2)U) at the wobble position (U34) in tRNA. Catalyzes the FAD-dependent demodification of cmnm(5)s(2)U34 to nm(5)s(2)U34, followed by the transfer of a methyl group from S-adenosyl-L-methionine to nm(5)s(2)U34, to form mnm(5)s(2)U34. This Cronobacter sakazakii (strain ATCC BAA-894) (Enterobacter sakazakii) protein is tRNA 5-methylaminomethyl-2-thiouridine biosynthesis bifunctional protein MnmC.